The sequence spans 269 residues: 2' cyclic ADP-D-ribose synthase AbTIR (269 aa).

A coiled-coil region spans residues 31-99 (LKTKLSEISR…KQQKDEIEHQ (69 aa)). One can recognise a TIR domain in the interval 133–266 (PEYDLFISHA…EIAHQLADVI (134 aa)). The NAD(+) site is built by S143, K172, and K202. E208 is a catalytic residue. An NAD(+)-binding site is contributed by K245.

As to quaternary structure, homodimer. In the presence of NAD(+) analog 8-amino-isoquinoline adenine dinucleotide (3AD) forms filaments with 3AD between monomers; conformational changes occur upon 3AD binding.

The catalysed reaction is NAD(+) = 2'cADPR + nicotinamide + H(+). It catalyses the reaction NAD(+) + H2O = ADP-D-ribose + nicotinamide + H(+). It carries out the reaction NADP(+) + H2O = ADP-D-ribose 2'-phosphate + nicotinamide + H(+). In terms of biological role, NAD(+) hydrolase (NADase) that catalyzes cleavage of NAD(+) into ADP-D-ribose (ADPR) and nicotinamide. In addition to ADPR, also generates a cyclization variant of cyclic ADPR (cADPR), termed 2'cADPR (v-cADPR). Cleaves NADP(+), but does not cyclize the product. The chain is 2' cyclic ADP-D-ribose synthase AbTIR from Acinetobacter baumannii (strain 1295743).